Here is a 173-residue protein sequence, read N- to C-terminus: MKSKVIVDELTMKRAITRITYEIIERNKQLDNVVLVGIKTRGVYLARRIQERLEQLESLHLAVGELDTKPFRDDMRVEEDTTSMPVDITGKDIILVDDVLYTGRTIRAAIDNLVSLGRPGRVSLAVLVDRGHRELPIRADYVGKNIPTSKTEEIVVEVVEVDGQDRISIVDPE.

The PRPP-binding motif lies at 93 to 105 (IILVDDVLYTGRT).

The protein belongs to the purine/pyrimidine phosphoribosyltransferase family. PyrR subfamily. In terms of assembly, homodimer and homohexamer; in equilibrium.

It catalyses the reaction UMP + diphosphate = 5-phospho-alpha-D-ribose 1-diphosphate + uracil. Its function is as follows. Regulates transcriptional attenuation of the pyrimidine nucleotide (pyr) operon by binding in a uridine-dependent manner to specific sites on pyr mRNA. This disrupts an antiterminator hairpin in the RNA and favors formation of a downstream transcription terminator, leading to a reduced expression of downstream genes. In terms of biological role, also displays a weak uracil phosphoribosyltransferase activity which is not physiologically significant. The chain is Bifunctional protein PyrR from Streptococcus equi subsp. zooepidemicus (strain MGCS10565).